A 138-amino-acid chain; its full sequence is Large ribosomal subunit protein eL14A (138 aa).

Ser2 is subject to N-acetylserine.

The protein belongs to the eukaryotic ribosomal protein eL14 family. As to quaternary structure, component of the large ribosomal subunit (LSU). Mature yeast ribosomes consist of a small (40S) and a large (60S) subunit. The 40S small subunit contains 1 molecule of ribosomal RNA (18S rRNA) and 33 different proteins (encoded by 57 genes). The large 60S subunit contains 3 rRNA molecules (25S, 5.8S and 5S rRNA) and 46 different proteins (encoded by 81 genes). Post-translationally, N-terminally acetylated by acetyltransferase NatA.

The protein localises to the cytoplasm. Its function is as follows. Component of the ribosome, a large ribonucleoprotein complex responsible for the synthesis of proteins in the cell. The small ribosomal subunit (SSU) binds messenger RNAs (mRNAs) and translates the encoded message by selecting cognate aminoacyl-transfer RNA (tRNA) molecules. The large subunit (LSU) contains the ribosomal catalytic site termed the peptidyl transferase center (PTC), which catalyzes the formation of peptide bonds, thereby polymerizing the amino acids delivered by tRNAs into a polypeptide chain. The nascent polypeptides leave the ribosome through a tunnel in the LSU and interact with protein factors that function in enzymatic processing, targeting, and the membrane insertion of nascent chains at the exit of the ribosomal tunnel. The protein is Large ribosomal subunit protein eL14A of Saccharomyces cerevisiae (strain ATCC 204508 / S288c) (Baker's yeast).